The chain runs to 147 residues: Ribonuclease H (147 aa).

One can recognise an RNase H type-1 domain in the interval 1 to 142; sequence MAGKVVMYTD…ADELANRGVR (142 aa). Mg(2+) is bound by residues D10, E48, D70, and D134.

This sequence belongs to the RNase H family. As to quaternary structure, monomer. The cofactor is Mg(2+).

Its subcellular location is the cytoplasm. The enzyme catalyses Endonucleolytic cleavage to 5'-phosphomonoester.. Endonuclease that specifically degrades the RNA of RNA-DNA hybrids. In Marinobacter nauticus (strain ATCC 700491 / DSM 11845 / VT8) (Marinobacter aquaeolei), this protein is Ribonuclease H.